The chain runs to 291 residues: 33 kDa chaperonin (291 aa).

2 cysteine pairs are disulfide-bonded: Cys237-Cys239 and Cys270-Cys273.

Belongs to the HSP33 family. Under oxidizing conditions two disulfide bonds are formed involving the reactive cysteines. Under reducing conditions zinc is bound to the reactive cysteines and the protein is inactive.

The protein resides in the cytoplasm. Functionally, redox regulated molecular chaperone. Protects both thermally unfolding and oxidatively damaged proteins from irreversible aggregation. Plays an important role in the bacterial defense system toward oxidative stress. The chain is 33 kDa chaperonin from Halalkalibacterium halodurans (strain ATCC BAA-125 / DSM 18197 / FERM 7344 / JCM 9153 / C-125) (Bacillus halodurans).